The chain runs to 740 residues: Phosphoribosylformylglycinamidine synthase subunit PurL (740 aa).

His50 is an active-site residue. ATP-binding residues include Tyr53 and Lys92. Glu94 contacts Mg(2+). Substrate contacts are provided by residues Ser95 to His98 and Arg117. Residue His96 is the Proton acceptor of the active site. Asp118 contacts Mg(2+). Substrate is bound at residue Gln241. Asp269 provides a ligand contact to Mg(2+). Glu313 to Gln315 lines the substrate pocket. ATP is bound by residues Asp495 and Gly532. Position 533 (Asn533) interacts with Mg(2+). Ser535 lines the substrate pocket.

Belongs to the FGAMS family. In terms of assembly, monomer. Part of the FGAM synthase complex composed of 1 PurL, 1 PurQ and 2 PurS subunits.

The protein localises to the cytoplasm. It carries out the reaction N(2)-formyl-N(1)-(5-phospho-beta-D-ribosyl)glycinamide + L-glutamine + ATP + H2O = 2-formamido-N(1)-(5-O-phospho-beta-D-ribosyl)acetamidine + L-glutamate + ADP + phosphate + H(+). It functions in the pathway purine metabolism; IMP biosynthesis via de novo pathway; 5-amino-1-(5-phospho-D-ribosyl)imidazole from N(2)-formyl-N(1)-(5-phospho-D-ribosyl)glycinamide: step 1/2. In terms of biological role, part of the phosphoribosylformylglycinamidine synthase complex involved in the purines biosynthetic pathway. Catalyzes the ATP-dependent conversion of formylglycinamide ribonucleotide (FGAR) and glutamine to yield formylglycinamidine ribonucleotide (FGAM) and glutamate. The FGAM synthase complex is composed of three subunits. PurQ produces an ammonia molecule by converting glutamine to glutamate. PurL transfers the ammonia molecule to FGAR to form FGAM in an ATP-dependent manner. PurS interacts with PurQ and PurL and is thought to assist in the transfer of the ammonia molecule from PurQ to PurL. The chain is Phosphoribosylformylglycinamidine synthase subunit PurL from Brucella canis (strain ATCC 23365 / NCTC 10854 / RM-666).